The chain runs to 490 residues: Transcriptional regulator FleQ (490 aa).

Residue Leu142 participates in 3',3'-c-di-GMP binding. ADP is bound by residues Val147 and 177 to 182 (GTGKEV). Residues 186–189 (NLHY) and 330–341 (ELISRMEHEKRG) contribute to the 3',3'-c-di-GMP site. Residues Arg334 and Arg363 each contribute to the ADP site.

In terms of assembly, forms homodimers. Forms homohexamers that inhibit transcription initiation. Interacts with FleN; this complex is formed in the presence as well as in the absence of c-di-GMP or ATP.

With respect to regulation, C-di-GMP interaction leads to active site obstruction, hexameric ring destabilization thus relieving DNA bending and activating gene transcription. Its function is as follows. AAA+ ATPase enhancer-binding protein that acts as a transcription regulator and plays a role in the modulation of mucin adhesion and flagellar gene expression. In addition to flagella genes, also regulates expression of biofilm-related genes. Functions as a transcriptional repressor in the absence of c-di-GMP and as an activator when c-di-GMP is present. The polypeptide is Transcriptional regulator FleQ (Pseudomonas aeruginosa (strain ATCC 15692 / DSM 22644 / CIP 104116 / JCM 14847 / LMG 12228 / 1C / PRS 101 / PAO1)).